Here is a 353-residue protein sequence, read N- to C-terminus: Phospho-N-acetylmuramoyl-pentapeptide-transferase (353 aa).

Transmembrane regions (helical) follow at residues 22-42 (FAFF…ITWA), 65-85 (TPTM…LFCI), 88-108 (DNIF…IGLI), 129-149 (LLAQ…SSEL), 161-181 (PLFD…ISSS), 192-212 (GLAT…LYLS), 228-248 (GLGE…GFLW), 256-276 (VFMG…LAII), 281-301 (ILLL…ILQV), and 330-350 (KIIV…LASI).

This sequence belongs to the glycosyltransferase 4 family. MraY subfamily. Requires Mg(2+) as cofactor.

It localises to the cell inner membrane. It catalyses the reaction UDP-N-acetyl-alpha-D-muramoyl-L-alanyl-gamma-D-glutamyl-meso-2,6-diaminopimeloyl-D-alanyl-D-alanine + di-trans,octa-cis-undecaprenyl phosphate = di-trans,octa-cis-undecaprenyl diphospho-N-acetyl-alpha-D-muramoyl-L-alanyl-D-glutamyl-meso-2,6-diaminopimeloyl-D-alanyl-D-alanine + UMP. Its pathway is cell wall biogenesis; peptidoglycan biosynthesis. In terms of biological role, catalyzes the initial step of the lipid cycle reactions in the biosynthesis of the cell wall peptidoglycan: transfers peptidoglycan precursor phospho-MurNAc-pentapeptide from UDP-MurNAc-pentapeptide onto the lipid carrier undecaprenyl phosphate, yielding undecaprenyl-pyrophosphoryl-MurNAc-pentapeptide, known as lipid I. The polypeptide is Phospho-N-acetylmuramoyl-pentapeptide-transferase (Campylobacter jejuni subsp. jejuni serotype O:6 (strain 81116 / NCTC 11828)).